A 207-amino-acid chain; its full sequence is FMN-dependent NADH:quinone oxidoreductase (207 aa).

Residues Ser-10, 16-18, 96-99, and 141-144 contribute to the FMN site; these read SIS, MYNL, and SRGG.

Belongs to the azoreductase type 1 family. Homodimer. It depends on FMN as a cofactor.

It carries out the reaction 2 a quinone + NADH + H(+) = 2 a 1,4-benzosemiquinone + NAD(+). It catalyses the reaction N,N-dimethyl-1,4-phenylenediamine + anthranilate + 2 NAD(+) = 2-(4-dimethylaminophenyl)diazenylbenzoate + 2 NADH + 2 H(+). Its function is as follows. Quinone reductase that provides resistance to thiol-specific stress caused by electrophilic quinones. In terms of biological role, also exhibits azoreductase activity. Catalyzes the reductive cleavage of the azo bond in aromatic azo compounds to the corresponding amines. The sequence is that of FMN-dependent NADH:quinone oxidoreductase from Nostoc sp. (strain PCC 7120 / SAG 25.82 / UTEX 2576).